Reading from the N-terminus, the 629-residue chain is 1-deoxy-D-xylulose-5-phosphate synthase (629 aa).

Thiamine diphosphate contacts are provided by residues histidine 72 and 113–115 (GHA). Residue aspartate 144 coordinates Mg(2+). Residues 145–146 (GA), asparagine 174, tyrosine 287, and glutamate 370 each bind thiamine diphosphate. Asparagine 174 lines the Mg(2+) pocket.

The protein belongs to the transketolase family. DXPS subfamily. Homodimer. Requires Mg(2+) as cofactor. The cofactor is thiamine diphosphate.

It carries out the reaction D-glyceraldehyde 3-phosphate + pyruvate + H(+) = 1-deoxy-D-xylulose 5-phosphate + CO2. The protein operates within metabolic intermediate biosynthesis; 1-deoxy-D-xylulose 5-phosphate biosynthesis; 1-deoxy-D-xylulose 5-phosphate from D-glyceraldehyde 3-phosphate and pyruvate: step 1/1. Functionally, catalyzes the acyloin condensation reaction between C atoms 2 and 3 of pyruvate and glyceraldehyde 3-phosphate to yield 1-deoxy-D-xylulose-5-phosphate (DXP). This chain is 1-deoxy-D-xylulose-5-phosphate synthase, found in Prochlorococcus marinus (strain AS9601).